Consider the following 154-residue polypeptide: Ribosomal RNA large subunit methyltransferase H (154 aa).

Gly103 is a binding site for S-adenosyl-L-methionine.

The protein belongs to the RNA methyltransferase RlmH family. Homodimer.

The protein localises to the cytoplasm. It catalyses the reaction pseudouridine(1915) in 23S rRNA + S-adenosyl-L-methionine = N(3)-methylpseudouridine(1915) in 23S rRNA + S-adenosyl-L-homocysteine + H(+). Its function is as follows. Specifically methylates the pseudouridine at position 1915 (m3Psi1915) in 23S rRNA. This Gemmatimonas aurantiaca (strain DSM 14586 / JCM 11422 / NBRC 100505 / T-27) protein is Ribosomal RNA large subunit methyltransferase H.